A 215-amino-acid chain; its full sequence is Histone H1.1 (215 aa).

Positions 1-43 (MSETVPPAPAASAAPEKPLAGKKAKKPAKAAAASKKKPAGPSV) are disordered. Ser-2 is subject to N-acetylserine. Ser-2 and Ser-12 each carry phosphoserine. At Lys-17 the chain carries N6-acetyllysine. A compositionally biased stretch (basic residues) spans 20–38 (AGKKAKKPAKAAAASKKKP). The residue at position 37 (Lys-37) is an N6-(beta-hydroxybutyryl)lysine. The 74-residue stretch at 39–112 (AGPSVSELIV…GASGSFKLNK (74 aa)) folds into the H15 domain. At Ser-44 the chain carries Phosphoserine. The residue at position 55 (Lys-55) is an N6-(beta-hydroxybutyryl)lysine. Position 57 is a citrulline (Arg-57). At Lys-67 the chain carries N6-(beta-hydroxybutyryl)lysine. Lys-78 bears the N6-acetyllysine mark. An N6-(beta-hydroxybutyryl)lysine modification is found at Lys-88. N6-(beta-hydroxybutyryl)lysine; alternate is present on Lys-93. Lys-93 carries the N6-acetyllysine; alternate modification. The segment at 94 to 215 (GTLVQTKGTG…KPKKAAPKKK (122 aa)) is disordered. Phosphoserine is present on Ser-107. Lys-109 is subject to N6-(beta-hydroxybutyryl)lysine. The span at 122 to 147 (GASKVATKTKATGASKKLKKATGASK) shows a compositional bias: low complexity. Lys-125 is modified (N6-acetyllysine). 2 stretches are compositionally biased toward basic residues: residues 148–181 (KSVK…KKVA) and 188–215 (KAVK…PKKK). Residue Thr-204 is modified to Phosphothreonine.

It belongs to the histone H1/H5 family. In terms of assembly, interacts with DFFB. Post-translationally, H1 histones are progressively phosphorylated during the cell cycle, becoming maximally phosphorylated during late G2 phase and M phase, and being dephosphorylated sharply thereafter. Citrullination at Arg-57 (H1R54ci) by PADI4 takes place within the DNA-binding site of H1 and results in its displacement from chromatin and global chromatin decondensation, thereby promoting pluripotency and stem cell maintenance.

The protein localises to the nucleus. Its subcellular location is the chromosome. Histone H1 protein binds to linker DNA between nucleosomes forming the macromolecular structure known as the chromatin fiber. Histones H1 are necessary for the condensation of nucleosome chains into higher-order structured fibers. Also acts as a regulator of individual gene transcription through chromatin remodeling, nucleosome spacing and DNA methylation. The protein is Histone H1.1 of Homo sapiens (Human).